The chain runs to 249 residues: Ribosomal RNA small subunit methyltransferase J (249 aa).

S-adenosyl-L-methionine contacts are provided by residues 101–102 (RD), 117–118 (ER), 153–154 (SS), and Asp171.

This sequence belongs to the methyltransferase superfamily. RsmJ family.

It localises to the cytoplasm. It carries out the reaction guanosine(1516) in 16S rRNA + S-adenosyl-L-methionine = N(2)-methylguanosine(1516) in 16S rRNA + S-adenosyl-L-homocysteine + H(+). Functionally, specifically methylates the guanosine in position 1516 of 16S rRNA. The polypeptide is Ribosomal RNA small subunit methyltransferase J (Salmonella arizonae (strain ATCC BAA-731 / CDC346-86 / RSK2980)).